Here is a 328-residue protein sequence, read N- to C-terminus: Peroxidase 25 (328 aa).

The signal sequence occupies residues 1–26 (MGVYLGKYCYIMIIMLVLVLGKEVRS). Disulfide bonds link Cys-38-Cys-114, Cys-71-Cys-76, Cys-120-Cys-324, and Cys-198-Cys-230. The Proton acceptor role is filled by His-69. Ca(2+) is bound by residues Asp-70, Val-73, Gly-75, Asp-77, and Ser-79. Position 161 (Pro-161) interacts with substrate. His-191 provides a ligand contact to heme b. A Ca(2+)-binding site is contributed by Thr-192. Asn-207 is a glycosylation site (N-linked (GlcNAc...) asparagine). Ca(2+)-binding residues include Asp-243, Ser-246, and Asp-251.

Belongs to the peroxidase family. Classical plant (class III) peroxidase subfamily. Heme b serves as cofactor. It depends on Ca(2+) as a cofactor.

It is found in the secreted. It carries out the reaction 2 a phenolic donor + H2O2 = 2 a phenolic radical donor + 2 H2O. Functionally, removal of H(2)O(2), oxidation of toxic reductants, biosynthesis and degradation of lignin, suberization, auxin catabolism, response to environmental stresses such as wounding, pathogen attack and oxidative stress. These functions might be dependent on each isozyme/isoform in each plant tissue. The sequence is that of Peroxidase 25 (PER25) from Arabidopsis thaliana (Mouse-ear cress).